Consider the following 511-residue polypeptide: Lysine--tRNA ligase (511 aa).

Glu-422 and Glu-429 together coordinate Mg(2+).

The protein belongs to the class-II aminoacyl-tRNA synthetase family. As to quaternary structure, homodimer. It depends on Mg(2+) as a cofactor.

The protein resides in the cytoplasm. The catalysed reaction is tRNA(Lys) + L-lysine + ATP = L-lysyl-tRNA(Lys) + AMP + diphosphate. This Chlorobaculum tepidum (strain ATCC 49652 / DSM 12025 / NBRC 103806 / TLS) (Chlorobium tepidum) protein is Lysine--tRNA ligase.